A 203-amino-acid chain; its full sequence is Calcineurin B-like protein 5 (203 aa).

Gly2 is lipidated: N-myristoyl glycine. 4 consecutive EF-hand domains span residues 30 to 65 (EVEVLHGLFIKLTSCLSNDNLLTKEKFQFILIKNTK), 66 to 101 (KRSLSAERIFGLFDMRNDGAIDFGEFVHTLNIFHPN), 103 to 138 (SPRDKAIFAFRLYDTRETGFIEPEEVKEMIIDVLEE), and 147 to 182 (IIDSIVSKTFEEADWKKDGIIDLEEWENFVATYPLT).

Belongs to the calcineurin regulatory subunit family. As to quaternary structure, homodimer. Interacts with PP2CA, CIPK2, CIPK11, CIPK23 and CIPK24. In terms of processing, both N-myristoylation and calcium-mediated conformational changes are essential for its function. As to expression, expressed in green tissues, but not in the roots.

It localises to the cytoplasm. It is found in the nucleus. Acts as a calcium sensor. CBL proteins interact with CIPK serine-threonine protein kinases. Binding of a CBL protein to the regulatory NAF domain of a CIPK protein lead to the activation of the kinase in a calcium-dependent manner. May function as a positive regulator of salt or drought responses. The chain is Calcineurin B-like protein 5 (CBL5) from Arabidopsis thaliana (Mouse-ear cress).